Reading from the N-terminus, the 413-residue chain is Putative zinc finger protein B0310.2 (413 aa).

Disordered regions lie at residues 130–151 (PIFS…KRSL) and 259–290 (VESD…TGPM). Residues 270–281 (PSPSTGDITENE) show a composition bias toward polar residues. 2 consecutive C2H2-type zinc fingers follow at residues 306-330 (FICM…MFIH) and 336-358 (HTCP…KKTH).

It localises to the nucleus. In Caenorhabditis elegans, this protein is Putative zinc finger protein B0310.2.